Reading from the N-terminus, the 315-residue chain is Protoheme IX farnesyltransferase (315 aa).

9 helical membrane passes run 38-58, 62-82, 111-131, 132-152, 159-179, 184-204, 233-253, 255-275, and 293-313; these read IIELLLITTVPVMFLAEQGVP, LVLLTCVGGYLSAGGANALNM, LVFGITLAIVSTLLFGFTVNW, LSAWLSLGALLFYVVVYTMIL, NIVWGGIAGCLPVLIGWSAVT, WAPVILFGVMFFWTPPHYWPL, IVIYSWVMVVVSLLLQPLGYT, WFYTAVALAAGGMWLWEAHGL, and LFHWSITYVSVLFLAIAVDPF.

This sequence belongs to the UbiA prenyltransferase family. Protoheme IX farnesyltransferase subfamily.

Its subcellular location is the cell membrane. It carries out the reaction heme b + (2E,6E)-farnesyl diphosphate + H2O = Fe(II)-heme o + diphosphate. Its pathway is porphyrin-containing compound metabolism; heme O biosynthesis; heme O from protoheme: step 1/1. Its function is as follows. Converts heme B (protoheme IX) to heme O by substitution of the vinyl group on carbon 2 of heme B porphyrin ring with a hydroxyethyl farnesyl side group. The sequence is that of Protoheme IX farnesyltransferase from Streptomyces coelicolor (strain ATCC BAA-471 / A3(2) / M145).